A 455-amino-acid polypeptide reads, in one-letter code: Gamma-glutamyl phosphate reductase (455 aa).

It belongs to the gamma-glutamyl phosphate reductase family.

The protein localises to the cytoplasm. The enzyme catalyses L-glutamate 5-semialdehyde + phosphate + NADP(+) = L-glutamyl 5-phosphate + NADPH + H(+). It participates in amino-acid biosynthesis; L-proline biosynthesis; L-glutamate 5-semialdehyde from L-glutamate: step 2/2. Functionally, catalyzes the NADPH-dependent reduction of L-glutamate 5-phosphate into L-glutamate 5-semialdehyde and phosphate. The product spontaneously undergoes cyclization to form 1-pyrroline-5-carboxylate. In Synechococcus sp. (strain JA-2-3B'a(2-13)) (Cyanobacteria bacterium Yellowstone B-Prime), this protein is Gamma-glutamyl phosphate reductase.